We begin with the raw amino-acid sequence, 859 residues long: Auxin response factor 2 (859 aa).

The tract at residues 1–48 is disordered; the sequence is MASSEVSMKGNRGGDNFSSSGFSDPKETRNVSVAGEGQKSNSTRSAAA. The span at 14–23 shows a compositional bias: low complexity; sequence GDNFSSSGFS. A DNA-binding region (TF-B3) is located at residues 164-266; that stretch reads FCKTLTASDT…ELRVGVRRAM (103 aa). Pro residues predominate over residues 396–407; sequence LAPPALSPVPMP. Disordered stretches follow at residues 396–442, 687–736, and 829–859; these read LAPP…LPAS, IASP…RSCT, and RSEEEAVVGEGSDAKDAKSASNPSLSSAGNS. Composition is skewed to polar residues over residues 416–426 and 695–704; these read IAPSSPDSSML and LSDQSKGSKS. The PB1 domain maps to 733 to 817; the sequence is RSCTKVHKQG…RKIFIYTKEE (85 aa). Residues 847 to 859 are compositionally biased toward polar residues; that stretch reads SASNPSLSSAGNS.

Belongs to the ARF family. Homodimers and heterodimers. Interacts with ARF1. As to expression, expressed in the whole plant.

It localises to the nucleus. Its function is as follows. Auxin response factors (ARFs) are transcriptional factors that bind specifically to the DNA sequence 5'-TGTCTC-3' found in the auxin-responsive promoter elements (AuxREs). Could act as transcriptional activator or repressor. Formation of heterodimers with Aux/IAA proteins may alter their ability to modulate early auxin response genes expression. Promotes flowering, stamen development, floral organ abscission and fruit dehiscence. Functions independently of ethylene and cytokinin response pathways. May act as a repressor of cell division and organ growth. This Arabidopsis thaliana (Mouse-ear cress) protein is Auxin response factor 2 (ARF2).